Here is a 426-residue protein sequence, read N- to C-terminus: Serine--tRNA ligase (426 aa).

231-233 (TAE) is an L-serine binding site. Residue 262–264 (RSE) participates in ATP binding. Glu-285 lines the L-serine pocket. 349-352 (EISS) lines the ATP pocket. Residue Ser-385 coordinates L-serine.

The protein belongs to the class-II aminoacyl-tRNA synthetase family. Type-1 seryl-tRNA synthetase subfamily. As to quaternary structure, homodimer. The tRNA molecule binds across the dimer.

Its subcellular location is the cytoplasm. It carries out the reaction tRNA(Ser) + L-serine + ATP = L-seryl-tRNA(Ser) + AMP + diphosphate + H(+). The catalysed reaction is tRNA(Sec) + L-serine + ATP = L-seryl-tRNA(Sec) + AMP + diphosphate + H(+). The protein operates within aminoacyl-tRNA biosynthesis; selenocysteinyl-tRNA(Sec) biosynthesis; L-seryl-tRNA(Sec) from L-serine and tRNA(Sec): step 1/1. Its function is as follows. Catalyzes the attachment of serine to tRNA(Ser). Is also able to aminoacylate tRNA(Sec) with serine, to form the misacylated tRNA L-seryl-tRNA(Sec), which will be further converted into selenocysteinyl-tRNA(Sec). The chain is Serine--tRNA ligase from Teredinibacter turnerae (strain ATCC 39867 / T7901).